Reading from the N-terminus, the 830-residue chain is V-type proton ATPase 116 kDa subunit a 3 (830 aa).

Residues 1–385 (MGSMFRSEEV…DAYGVGRYQE (385 aa)) lie on the Cytoplasmic side of the membrane. Positions 139 to 158 (QLAAAHTDGASERTPLLQAP) are disordered. Residues 386-404 (VNPAPYTIITFPFLFAVMF) traverse the membrane as a helical segment. Topologically, residues 405-406 (GD) are vacuolar. The helical transmembrane segment at 407 to 423 (VGHGLLMFLFALAMVLA) threads the bilayer. At 424-438 (ENRPAVKAAQNEIWQ) the chain is on the cytoplasmic side. Residues 439–468 (TFFRGRYLLLLMGLFSIYTGFIYNECFSRA) form a helical membrane-spanning segment. Topologically, residues 469–532 (TSIFPSGWSV…AANHLSFLNS (64 aa)) are vacuolar. The helical transmembrane segment at 533-552 (FKMKMSVILGVVHMAFGVVL) threads the bilayer. At 553-570 (GVFNHVHFGQRHRLLLET) the chain is on the cytoplasmic side. A helical transmembrane segment spans residues 571–591 (LPELTFLLGLFGYLVFLVIYK). At 592-635 (WLCVWAARAASAPSILIHFINMFLFSHSPSNRLLYPRQEVVQAT) the chain is on the vacuolar side. The helical transmembrane segment at 636–655 (LVVLALAMVPILLLGTPLHL) threads the bilayer. Residues 656-720 (LHRHRRRLRR…EVLMHQAIHT (65 aa)) are Cytoplasmic-facing. The interval 681 to 701 (LPDASVNGWSSDEEKAGGLDD) is disordered. Residues 721–745 (IEFCLGCVSNTASYLRLWALSLAHA) traverse the membrane as a helical segment. Over 746 to 766 (QLSEVLWAMVMRIGLGLGREV) the chain is Vacuolar. A helical membrane pass occupies residues 767-807 (GVAAVVLVPIFAAFAVMTVAILLVMEGLSAFLHALRLHWVE). The Cytoplasmic portion of the chain corresponds to 808–830 (FQNKFYSGTGYKLSPFTFAATDD).

Belongs to the V-ATPase 116 kDa subunit family. V-ATPase is a heteromultimeric enzyme made up of two complexes: the ATP-hydrolytic V1 complex and the proton translocation V0 complex. The V1 complex consists of three catalytic AB heterodimers that form a heterohexamer, three peripheral stalks each consisting of EG heterodimers, one central rotor including subunits D and F, and the regulatory subunits C and H. The proton translocation complex V0 consists of the proton transport subunit a, a ring of proteolipid subunits c9c'', rotary subunit d, subunits e and f, and the accessory subunits ATP6AP1/Ac45 and ATP6AP2/PRR. In terms of tissue distribution, isoform long is highly expressed in osteoclastomas. Isoform short is highly expressed in thymus.

The protein localises to the membrane. Subunit of the V0 complex of vacuolar(H+)-ATPase (V-ATPase), a multisubunit enzyme composed of a peripheral complex (V1) that hydrolyzes ATP and a membrane integral complex (V0) that translocates protons. V-ATPase is responsible for acidifying and maintaining the pH of intracellular compartments and in some cell types, is targeted to the plasma membrane, where it is responsible for acidifying the extracellular environment. Seems to be directly involved in T-cell activation. The chain is V-type proton ATPase 116 kDa subunit a 3 (TCIRG1) from Homo sapiens (Human).